Here is a 623-residue protein sequence, read N- to C-terminus: Actin-related protein 8 (623 aa).

Over residues 1-24 (MTQTDRDAENGRDREKDREKEQQR) the composition is skewed to basic and acidic residues. Residues 1–29 (MTQTDRDAENGRDREKDREKEQQRGVKRP) are disordered. Residue 283–286 (DVGD) participates in ATP binding. Residues 428–438 (TQSKQDQSSKA) are compositionally biased toward low complexity. Residues 428-458 (TQSKQDQSSKASADRKSFPKPSSFEGESSVC) form a disordered region.

It belongs to the actin family. ARP8 subfamily. Component of the chromatin remodeling INO80 complex; specifically part of a complex module associated with the DBINO domain of INO80. Exists as monomers and dimers, but the dimer is most probably the biologically relevant form required for stable interactions with histones that exploits the twofold symmetry of the nucleosome core.

The protein localises to the nucleus. It localises to the chromosome. Functionally, plays an important role in the functional organization of mitotic chromosomes. Exhibits low basal ATPase activity, and unable to polymerize. Proposed core component of the chromatin remodeling INO80 complex which is involved in transcriptional regulation, DNA replication and probably DNA repair. Required for the recruitment of INO80 (and probably the INO80 complex) to sites of DNA damage Strongly prefer nucleosomes and H3-H4 tetramers over H2A-H2B dimers, suggesting it may act as a nucleosome recognition module within the complex. In Danio rerio (Zebrafish), this protein is Actin-related protein 8 (actr8).